Reading from the N-terminus, the 61-residue chain is MLNIFSLICICINSALHSSSFFFAKLPEAYAFFNPIVDVMPVIPVLFFLLALVWQAAVSFR.

Positions 1-24 are excised as a propeptide; the sequence is MLNIFSLICICINSALHSSSFFFA. A helical membrane pass occupies residues 40 to 60; sequence MPVIPVLFFLLALVWQAAVSF.

It belongs to the PsbK family. PSII is composed of 1 copy each of membrane proteins PsbA, PsbB, PsbC, PsbD, PsbE, PsbF, PsbH, PsbI, PsbJ, PsbK, PsbL, PsbM, PsbT, PsbX, PsbY, PsbZ, Psb30/Ycf12, at least 3 peripheral proteins of the oxygen-evolving complex and a large number of cofactors. It forms dimeric complexes.

Its subcellular location is the plastid. It localises to the chloroplast thylakoid membrane. One of the components of the core complex of photosystem II (PSII). PSII is a light-driven water:plastoquinone oxidoreductase that uses light energy to abstract electrons from H(2)O, generating O(2) and a proton gradient subsequently used for ATP formation. It consists of a core antenna complex that captures photons, and an electron transfer chain that converts photonic excitation into a charge separation. This Liriodendron tulipifera (Tuliptree) protein is Photosystem II reaction center protein K.